The chain runs to 100 residues: Enhancer of yellow 2 transcription factor (100 aa).

Belongs to the ENY2 family. As to quaternary structure, component of the nuclear pore complex (NPC)-associated AMEX complex (anchoring and mRNA export complex), composed of at least e(y)2 and xmas-2. Component of the SAGA transcription coactivator-HAT complexes, at least composed of Ada2b, e(y)2, Pcaf/Gcn5, Taf10 and Nipped-A/Trrap. Within the SAGA complex, e(y)2, Sgf11, and not/nonstop form an additional subcomplex of SAGA called the DUB module (deubiquitination module). Component of the THO complex, composed of at least e(y)2, HPR1, THO2, THOC5, THOC6 and THOC7. Interacts with e(y)1. Interacts with su(Hw) (via zinc fingers). Interacts with xmas-2; required for localization to the nuclear periphery. Interacts with the nuclear pore complex (NPC).

It localises to the nucleus. Its subcellular location is the nucleoplasm. The protein resides in the cytoplasm. Functionally, involved in mRNA export coupled transcription activation by association with both the AMEX and the SAGA complexes. The SAGA complex is a multiprotein complex that activates transcription by remodeling chromatin and mediating histone acetylation and deubiquitination. Within the SAGA complex, participates in a subcomplex that specifically deubiquitinates histone H2B. The SAGA complex is recruited to specific gene promoters by activators, where it is required for transcription. Required for nuclear receptor-mediated transactivation. Involved in transcription elongation by recruiting the THO complex onto nascent mRNA. The AMEX complex functions in docking export-competent ribonucleoprotein particles (mRNPs) to the nuclear entrance of the nuclear pore complex (nuclear basket). AMEX participates in mRNA export and accurate chromatin positioning in the nucleus by tethering genes to the nuclear periphery. The sequence is that of Enhancer of yellow 2 transcription factor from Drosophila ananassae (Fruit fly).